Consider the following 541-residue polypeptide: Membrane protein insertase YidC (541 aa).

5 helical membrane passes run 7–27 (LFLV…QTDH), 340–360 (QLIH…TFIV), 415–435 (LGGC…YYML), 453–473 (LAAP…MFFI), and 494–514 (PVIF…YYIV).

It belongs to the OXA1/ALB3/YidC family. Type 1 subfamily. As to quaternary structure, interacts with the Sec translocase complex via SecD. Specifically interacts with transmembrane segments of nascent integral membrane proteins during membrane integration.

The protein localises to the cell inner membrane. Functionally, required for the insertion and/or proper folding and/or complex formation of integral membrane proteins into the membrane. Involved in integration of membrane proteins that insert both dependently and independently of the Sec translocase complex, as well as at least some lipoproteins. Aids folding of multispanning membrane proteins. The chain is Membrane protein insertase YidC from Edwardsiella ictaluri (strain 93-146).